Here is a 1020-residue protein sequence, read N- to C-terminus: Contactin-1 (1020 aa).

A signal peptide spans 1–20; that stretch reads MKMPLLVSHLLLISLTSCLG. Ig-like C2-type domains follow at residues 41–131, 137–223, 241–326, 331–407, 413–500, and 504–603; these read PIFE…ATLS, PFPP…KSVF, PADI…ARIY, PEWV…AELK, PTFE…GTLV, and PTRI…LVVR. Intrachain disulfides connect Cys-65-Cys-114 and Cys-158-Cys-211. Asn-208 and Asn-258 each carry an N-linked (GlcNAc...) asparagine glycan. An intrachain disulfide couples Cys-263 to Cys-310. Asn-338 carries N-linked (GlcNAc...) asparagine glycosylation. Disulfide bonds link Cys-352–Cys-391 and Cys-436–Cys-484. N-linked (GlcNAc...) asparagine glycosylation is found at Asn-457, Asn-473, Asn-494, and Asn-521. Cys-526 and Cys-585 are disulfide-bonded. N-linked (GlcNAc...) asparagine glycosylation occurs at Asn-593. 4 Fibronectin type-III domains span residues 608 to 706, 711 to 808, 813 to 908, and 909 to 1002; these read PPGG…TDGA, APSD…SAQD, APTE…APPS, and QPPR…TLSS. Residues 695–719 form a disordered region; it reads SIPSNRIKTDGAAPNVAPSDVGGGG. Residue Asn-935 is glycosylated (N-linked (GlcNAc...) asparagine). Residue Ser-1001 is the site of GPI-anchor amidated serine attachment. Residues 1002–1020 constitute a propeptide, removed in mature form; sequence SSLLSLLLPSLGFLVYSEF.

This sequence belongs to the immunoglobulin superfamily. Contactin family. Monomer. Interacts with CNTNAP1 in cis form. Binds to the carbonic-anhydrase like domain of PTPRZ1. Interacts with NOTCH1 and TNR. Detected in a complex with NRCAM and PTPRB. Interacts with TASOR. In terms of tissue distribution, expressed in the ovary and in Sertoli cells of the testis.

It localises to the cell membrane. Functionally, contactins mediate cell surface interactions during nervous system development. Involved in the formation of paranodal axo-glial junctions in myelinated peripheral nerves and in the signaling between axons and myelinating glial cells via its association with CNTNAP1. Participates in oligodendrocytes generation by acting as a ligand of NOTCH1. Its association with NOTCH1 promotes NOTCH1 activation through the released notch intracellular domain (NICD) and subsequent translocation to the nucleus. Interaction with TNR induces a repulsion of neurons and an inhibition of neurite outgrowth. The chain is Contactin-1 (Cntn1) from Mus musculus (Mouse).